A 344-amino-acid chain; its full sequence is Ferrochelatase (344 aa).

Fe cation is bound by residues His214 and Glu295.

The protein belongs to the ferrochelatase family.

Its subcellular location is the cytoplasm. The enzyme catalyses heme b + 2 H(+) = protoporphyrin IX + Fe(2+). Its pathway is porphyrin-containing compound metabolism; protoheme biosynthesis; protoheme from protoporphyrin-IX: step 1/1. In terms of biological role, catalyzes the ferrous insertion into protoporphyrin IX. The protein is Ferrochelatase of Allorhizobium ampelinum (strain ATCC BAA-846 / DSM 112012 / S4) (Agrobacterium vitis (strain S4)).